The chain runs to 317 residues: Transaldolase (317 aa).

Lys126 functions as the Schiff-base intermediate with substrate in the catalytic mechanism.

The protein belongs to the transaldolase family. Type 1 subfamily. In terms of assembly, homodimer.

It localises to the cytoplasm. The catalysed reaction is D-sedoheptulose 7-phosphate + D-glyceraldehyde 3-phosphate = D-erythrose 4-phosphate + beta-D-fructose 6-phosphate. It functions in the pathway carbohydrate degradation; pentose phosphate pathway; D-glyceraldehyde 3-phosphate and beta-D-fructose 6-phosphate from D-ribose 5-phosphate and D-xylulose 5-phosphate (non-oxidative stage): step 2/3. Transaldolase is important for the balance of metabolites in the pentose-phosphate pathway. The chain is Transaldolase from Burkholderia cenocepacia (strain ATCC BAA-245 / DSM 16553 / LMG 16656 / NCTC 13227 / J2315 / CF5610) (Burkholderia cepacia (strain J2315)).